We begin with the raw amino-acid sequence, 247 residues long: 23S rRNA (guanosine-2'-O-)-methyltransferase RlmB (247 aa).

S-adenosyl-L-methionine is bound by residues glycine 197, isoleucine 217, and leucine 226.

The protein belongs to the class IV-like SAM-binding methyltransferase superfamily. RNA methyltransferase TrmH family. RlmB subfamily.

Its subcellular location is the cytoplasm. It catalyses the reaction guanosine(2251) in 23S rRNA + S-adenosyl-L-methionine = 2'-O-methylguanosine(2251) in 23S rRNA + S-adenosyl-L-homocysteine + H(+). Specifically methylates the ribose of guanosine 2251 in 23S rRNA. The sequence is that of 23S rRNA (guanosine-2'-O-)-methyltransferase RlmB from Vibrio cholerae serotype O1 (strain ATCC 39315 / El Tor Inaba N16961).